Here is a 113-residue protein sequence, read N- to C-terminus: N(2)-fixation sustaining protein CowN (113 aa).

It belongs to the CowN family.

Its function is as follows. Is required to sustain N(2)-dependent growth in the presence of low levels of carbon monoxide (CO). Probably acts by protecting the N(2) fixation ability of the nitrogenase complex, which is inactivated in the presence of CO. The sequence is that of N(2)-fixation sustaining protein CowN from Azoarcus sp. (strain BH72).